A 478-amino-acid polypeptide reads, in one-letter code: Protein adenylyltransferase VbhT (478 aa).

The region spanning 55-200 is the Fido domain; sequence FDLDHMKKIH…RRNLTEFTVN (146 aa). ATP contacts are provided by residues 85-88, 133-136, 140-147, and serine 175; these read KDNS, NALH, and EGNGRTLR.

In terms of assembly, homodimer. Interacts with VbhA.

The enzyme catalyses L-tyrosyl-[protein] + ATP = O-(5'-adenylyl)-L-tyrosyl-[protein] + diphosphate. The catalysed reaction is L-threonyl-[protein] + ATP = 3-O-(5'-adenylyl)-L-threonyl-[protein] + diphosphate. Its activity is regulated as follows. Adenylyltransferase activity is inhibited by antitoxin VbhA; which acts by competing with ATP-binding at Arg-147 and prevents productive ATP-binding. Its function is as follows. Toxic component of type II toxin-antitoxin (TA) system VbhT-VbhA. Adenylyltransferase involved in virulence by mediating the addition of adenosine 5'-monophosphate (AMP) to specific residue of host GTPases. The resulting AMPylation affects GTPases, impairing actin assembly in infected cells. This is Protein adenylyltransferase VbhT (vbhT) from Bartonella schoenbuchensis (strain DSM 13525 / NCTC 13165 / R1).